Here is a 990-residue protein sequence, read N- to C-terminus: Protein argonaute 7 (990 aa).

Over residues 1 to 13 (MEEKTHHHHHSTN) the composition is skewed to basic residues. Positions 1–25 (MEEKTHHHHHSTNKHIPSSKSRTPL) are disordered. One can recognise a PAZ domain in the interval 379–484 (EFLTDLPRNK…LPMELCMICE (106 aa)). The region spanning 649–950 (LIICVMEKKH…AAYRGRLYIE (302 aa)) is the Piwi domain. The interval 953 to 973 (SESNGGSMNPSSVSRVGPPKT) is disordered. Positions 954–966 (ESNGGSMNPSSVS) are enriched in polar residues.

The protein belongs to the argonaute family. Ago subfamily. In terms of tissue distribution, expressed in leaves and floral buds, and at low levels in roots.

Its function is as follows. Involved in RNA-mediated post-transcriptional gene silencing (PTGS). Main component of the RNA-induced silencing complex (RISC) that binds to a short guide RNA such as a microRNA (miRNA) or small interfering RNA (siRNA). RISC uses the mature miRNA or siRNA as a guide for slicer-directed cleavage of homologous mRNAs to repress gene expression. Required for the processing of 21 nucleotide trans-acting siRNAs (ta-siRNAs) derived from TAS3a transcripts. Associates preferentially with the microRNA (miRNA) miR390 which guides the cleavage of TAS3 precursor RNA. Seems to act as miR390 specific slicer. Associates mainly with small RNAs of 21 nucleotide in length and with a 5' terminal adenosine. Acts in the RDR6/SGS3/DCL4/AGO7 trans-acting siRNA pathway involved in leaf developmental timing. Does not seem to act on leaf polarity. Required for the production of the 30-40nt bacterial-induced long siRNAs (lsiRNA). Involved in antiviral RNA silencing by contributing to efficient viral RNAs clearance. Targets less structured viral RNAs than AGO1 which is capable of targeting RNAs with more compact structures. The sequence is that of Protein argonaute 7 (AGO7) from Arabidopsis thaliana (Mouse-ear cress).